Reading from the N-terminus, the 158-residue chain is Ribonuclease H (158 aa).

The 142-residue stretch at 3–144 (ELKLIHIFTD…CDQLARAAAE (142 aa)) folds into the RNase H type-1 domain. 4 residues coordinate Mg(2+): Asp-12, Glu-50, Asp-72, and Asp-136.

This sequence belongs to the RNase H family. Monomer. Mg(2+) is required as a cofactor.

It localises to the cytoplasm. The enzyme catalyses Endonucleolytic cleavage to 5'-phosphomonoester.. Endonuclease that specifically degrades the RNA of RNA-DNA hybrids. This chain is Ribonuclease H, found in Shewanella sp. (strain MR-7).